Reading from the N-terminus, the 278-residue chain is Troponin T, slow skeletal muscle (278 aa).

The segment covering 1-37 (MSDTEEQEYEEEQPEEEAAEEEEEAPEEPEPVAEPEE) has biased composition (acidic residues). Disordered regions lie at residues 1 to 63 (MSDT…RVDF) and 105 to 153 (RRRS…KKKV). Serine 2 bears the Phosphoserine; by CK2 mark. Positions 43-55 (SRPVVPPLIPPKI) are enriched in pro residues. The segment covering 105–149 (RRRSERAEQQRFRTEKERERQAKLAEEKMRKEEEEAKKRAEDDAK) has biased composition (basic and acidic residues).

The protein belongs to the troponin T family. In terms of assembly, interacts with TPM3.

Its function is as follows. Troponin T is the tropomyosin-binding subunit of troponin, the thin filament regulatory complex which confers calcium-sensitivity to striated muscle actomyosin ATPase activity. The sequence is that of Troponin T, slow skeletal muscle (TNNT1) from Homo sapiens (Human).